Here is a 338-residue protein sequence, read N- to C-terminus: Methionine synthase (338 aa).

The Zn(2+) site is built by histidine 210, cysteine 212, glutamate 234, and cysteine 294.

This sequence belongs to the archaeal MetE family. Zn(2+) serves as cofactor.

Its pathway is amino-acid biosynthesis; L-methionine biosynthesis via de novo pathway. Functionally, catalyzes the transfer of a methyl group to L-homocysteine resulting in methionine formation. The physiological methyl donor is unknown. This Pyrococcus furiosus (strain ATCC 43587 / DSM 3638 / JCM 8422 / Vc1) protein is Methionine synthase.